Consider the following 627-residue polypeptide: Pentatricopeptide repeat-containing protein At2g35030, mitochondrial (627 aa).

The transit peptide at 1–44 directs the protein to the mitochondrion; sequence MQSRALSRLRSYYKRSSVFPSSDNDRSVQLFNLVRSIYSSSSRP. PPR repeat units lie at residues 45 to 75, 76 to 110, 111 to 138, 139 to 173, 174 to 200, 201 to 235, 236 to 262, 263 to 293, 294 to 328, 330 to 360, 365 to 396, 398 to 432, 433 to 467, and 469 to 499; these read RVPQ…LPER, DVVT…KNVV, TWTA…MPER, NVVS…NIVS, WNSM…MPRR, DVVS…NIIS, WNAM…MPER, DFAS…MPEK, NVIS…GSVK, NVGT…ISKS, NEIV…LVCQ, DLIS…GFKP, SAVT…ESLP, and REEH…DDAR. Residues 504–579 are type E motif; the sequence is FYGAILSACN…QPGCSWVKVG (76 aa). The tract at residues 580-610 is type E(+) motif; the sequence is KQNHLFVVGDKSHPQFEALDSILSDLRNKMR.

The protein belongs to the PPR family. PCMP-E subfamily.

The protein localises to the mitochondrion. In Arabidopsis thaliana (Mouse-ear cress), this protein is Pentatricopeptide repeat-containing protein At2g35030, mitochondrial (PCMP-E15).